Reading from the N-terminus, the 526-residue chain is MNDYNVTGTTLGDAFAKLPPNWGQLTGALLFLAACTWIYLPAFDGVPAPFAGYRSPLEPAIVAKTRYAFAASDIISEGYAKWKSSMYKISRHGGDVVVLSRKYIDELQNAPHERLSSIKGLIKNFGGQYSGIDLLDESDIGTRALQTKITPNLTKFSDDMRDELEYALGRDMPDCEDWTLVPLQPILLKLLGRITSRVLIGLPICRDEKWLDAASQHAHNVTITQIVMKAVHPIFRPFLNLVLPTVWRYKSAVRRGKAILAPEVQRRRNLEDNDPDYVKPNDLLQAMMDLSTPGGKDSQPEDLAHRHLLITLVAGHSTAAAGSHALMDLVSRPQLLEELRDEVLQVLQENGGNWGKQSLSKLWKMDSFFRESQRQNPPSLLGFHRIVQDPAGITLHDGVHVPYGTHLCIAPHSVSSDPAVIPNPDVFDGLRYYEQRRQKPDESMKHQHATADKNHLHFGYGTWSCPGRFLASDELKMTLSALLLRYDFKYPDGSSRPTNKHIDEFPYVDPETPLLMRRRHQGGTGV.

The helical transmembrane segment at 21–43 threads the bilayer; the sequence is NWGQLTGALLFLAACTWIYLPAF. Heme is bound at residue cysteine 465.

It belongs to the cytochrome P450 family. It depends on heme as a cofactor.

It localises to the membrane. Its pathway is secondary metabolite biosynthesis. Its function is as follows. Cytochrome P450 monooxygeanse; part of the gene cluster that mediates the biosynthesis of terpendoles, indole-diterpene (IDT) mycotoxins including terpendole I, terpendole K, terpendole C, as well as the kinesin Eg5 inhibitor terpendole E. Terpendoles biosynthesis begins with the synthesis of geranylgeranyl diphosphate (GGPP) by a yet unidentified GGPP synthase. Condensation of indole-3-glycerol phosphate with GGPP by the prenyltransferase terC then forms 3-geranylgeranylindole (3-GGI), followed by epoxidation and cyclization of this intermediate (by the FAD-dependent monooxygeanse terM and the terpene cyclase terB) to form paspaline. The cytochrome monooxygenase terQ then hydroxylates paspalline at C-11 to yield terpendole E. The cytochrome monooxygenase terP converts terpendole E to 13-desoxyterpendole I, and terQ converts 13-desoxyterpendole I into terpendole I. TerF and terK are required for conversion of terpendole I to terpendole C which is further converted to terpendole K. The polypeptide is Cytochrome P450 monooxygeanse terK (Tolypocladium album (Soil fungus)).